The primary structure comprises 124 residues: Small ribosomal subunit protein uS12 (124 aa).

The tract at residues 1-23 (MATINQLVRKPRKRPVAKSDVPA) is disordered. Position 89 is a 3-methylthioaspartic acid (Asp89). A disordered region spans residues 101 to 124 (ALDTSGVQNRRQGRSKYGTKRPKS). Residues 111 to 124 (RQGRSKYGTKRPKS) show a composition bias toward basic residues.

It belongs to the universal ribosomal protein uS12 family. As to quaternary structure, part of the 30S ribosomal subunit. Contacts proteins S8 and S17. May interact with IF1 in the 30S initiation complex.

Its function is as follows. With S4 and S5 plays an important role in translational accuracy. Functionally, interacts with and stabilizes bases of the 16S rRNA that are involved in tRNA selection in the A site and with the mRNA backbone. Located at the interface of the 30S and 50S subunits, it traverses the body of the 30S subunit contacting proteins on the other side and probably holding the rRNA structure together. The combined cluster of proteins S8, S12 and S17 appears to hold together the shoulder and platform of the 30S subunit. The protein is Small ribosomal subunit protein uS12 of Chromohalobacter salexigens (strain ATCC BAA-138 / DSM 3043 / CIP 106854 / NCIMB 13768 / 1H11).